The sequence spans 1222 residues: ATP-dependent helicase/nuclease subunit A (1222 aa).

One can recognise a UvrD-like helicase ATP-binding domain in the interval 39–495; it reads QKRTAQQIEA…ILLKENFRSQ (457 aa). Residue 60–67 coordinates ATP; that stretch reads ASAGSGKT. In terms of domain architecture, UvrD-like helicase C-terminal spans 524–810; the sequence is QLIAGSHAQT…NLMTIHKSKG (287 aa).

This sequence belongs to the helicase family. AddA subfamily. Heterodimer of AddA and AddB/RexB. Mg(2+) serves as cofactor.

It catalyses the reaction Couples ATP hydrolysis with the unwinding of duplex DNA by translocating in the 3'-5' direction.. The catalysed reaction is ATP + H2O = ADP + phosphate + H(+). In terms of biological role, the heterodimer acts as both an ATP-dependent DNA helicase and an ATP-dependent, dual-direction single-stranded exonuclease. Recognizes the chi site generating a DNA molecule suitable for the initiation of homologous recombination. The AddA nuclease domain is required for chi fragment generation; this subunit has the helicase and 3' -&gt; 5' nuclease activities. The sequence is that of ATP-dependent helicase/nuclease subunit A from Streptococcus pyogenes serotype M6 (strain ATCC BAA-946 / MGAS10394).